The following is a 92-amino-acid chain: Secreted RxLR effector protein 21 (92 aa).

A signal peptide spans Met-1–Ala-21. Residues Arg-30 to Arg-33 carry the RxLR motif.

Belongs to the RxLR effector family.

It is found in the secreted. It localises to the host nucleus. The protein resides in the host cytoplasm. Its function is as follows. Secreted effector that completely suppresses the host cell death induced by cell death-inducing proteins. This is Secreted RxLR effector protein 21 from Plasmopara viticola (Downy mildew of grapevine).